The chain runs to 544 residues: Fructose dehydrogenase large subunit (544 aa).

14 to 30 (GAGICGSLLAHKLVRNG) is an FAD binding site. The active-site Proton acceptor is the histidine 478.

The protein belongs to the GMC oxidoreductase family. In terms of assembly, heterotrimer composed of FdhL, FdhS and FdhC. It depends on FAD as a cofactor.

It is found in the cell membrane. The enzyme catalyses keto-D-fructose + a ubiquinone = 5-dehydro-D-fructose + a ubiquinol. Catalytic subunit of fructose dehydrogenase, an enzyme that catalyzes the oxidation of D-fructose to produce 5-keto-D-fructose. This chain is Fructose dehydrogenase large subunit (fdhL), found in Gluconobacter japonicus.